The chain runs to 88 residues: Cell division topological specificity factor (88 aa).

Belongs to the MinE family.

Prevents the cell division inhibition by proteins MinC and MinD at internal division sites while permitting inhibition at polar sites. This ensures cell division at the proper site by restricting the formation of a division septum at the midpoint of the long axis of the cell. The sequence is that of Cell division topological specificity factor from Escherichia coli (strain SMS-3-5 / SECEC).